The primary structure comprises 358 residues: Methionine aminopeptidase 2 (358 aa).

His109 is a binding site for substrate. The a divalent metal cation site is built by Asp130, Asp141, and His210. His218 serves as a coordination point for substrate. A divalent metal cation contacts are provided by Glu243 and Glu339.

This sequence belongs to the peptidase M24A family. Methionine aminopeptidase eukaryotic type 2 subfamily. The cofactor is Co(2+). It depends on Zn(2+) as a cofactor. Requires Mn(2+) as cofactor. Fe(2+) is required as a cofactor.

Its subcellular location is the cytoplasm. The enzyme catalyses Release of N-terminal amino acids, preferentially methionine, from peptides and arylamides.. Its function is as follows. Cotranslationally removes the N-terminal methionine from nascent proteins. The N-terminal methionine is often cleaved when the second residue in the primary sequence is small and uncharged (Met-Ala-, Cys, Gly, Pro, Ser, Thr, or Val). The sequence is that of Methionine aminopeptidase 2 from Encephalitozoon intestinalis (strain ATCC 50506) (Microsporidian parasite).